Consider the following 270-residue polypeptide: Glutamate racemase (270 aa).

Substrate is bound by residues 15 to 16 and 47 to 48; these read DS and YG. The active-site Proton donor/acceptor is Cys-78. Substrate is bound at residue 79–80; it reads NT. Residue Cys-189 is the Proton donor/acceptor of the active site. 190–191 contacts substrate; the sequence is TH.

The protein belongs to the aspartate/glutamate racemases family.

It catalyses the reaction L-glutamate = D-glutamate. Its pathway is cell wall biogenesis; peptidoglycan biosynthesis. In terms of biological role, provides the (R)-glutamate required for cell wall biosynthesis. The chain is Glutamate racemase from Syntrophus aciditrophicus (strain SB).